The chain runs to 684 residues: Cyclic nucleotide-gated channel alpha-1 (684 aa).

Over 1-161 (MKTNIINTWH…PSGNTYYNWL (161 aa)) the chain is Cytoplasmic. Residues 34 to 145 (ACSSFSDDDN…TKEKKEEEKK (112 aa)) are disordered. Over residues 39–54 (SDDDNGSLSEESENED) the composition is skewed to acidic residues. Over residues 105–145 (SKADDKNENKKDPEKKKKKEKEKEKKKKEEKTKEKKEEEKK) the composition is skewed to basic and acidic residues. A helical membrane pass occupies residues 162 to 183 (FCITLPVMYNWTMIIARACFDE). Topologically, residues 184-193 (LQSDYLEYWL) are extracellular. A helical membrane pass occupies residues 194-214 (IFDYVSDVVYLADMFVRTRTG). Over 215 to 239 (YLEQGLLVKDRMKLIEKYKANLQFK) the chain is Cytoplasmic. The helical transmembrane segment at 240-258 (LDVLSVIPTDLLYIKFGWN) threads the bilayer. Residues 259–263 (YPEIR) are Extracellular-facing. Residues 264–282 (LNRLLRISRMFEFFQRTET) traverse the membrane as a helical segment. The Cytoplasmic segment spans residues 283 to 289 (RTNYPNI). The interval 287-395 (PNIFRISNLV…GNIGSMISNM (109 aa)) is ion conduction pathway. Residues 290–313 (FRISNLVMYIVIIIHWNACVYYSI) traverse the membrane as a helical segment. Topologically, residues 314–336 (SKAIGFGNDTWVYPDVNDPEFGR) are extracellular. Residue Asn-321 is glycosylated (N-linked (GlcNAc...) asparagine). 2 helical membrane-spanning segments follow: residues 337-371 (LARKYVYSLYWSTLTLTTIGETPPPVLDSEYIFVV) and 372-396 (VDFLIGVLIFATIVGNIGSMISNMN). The tract at residues 354–357 (TIGE) is selectivity filter. Residues 397–473 (AARAEFQSRV…DTLKKVRIFA (77 aa)) are C-linker. Residues 397–684 (AARAEFQSRV…ESELTESLQD (288 aa)) are Cytoplasmic-facing. A cyclic nucleotide-binding domain region spans residues 477 to 597 (AGLLVELVLK…EEKGRQILMK (121 aa)). Residues Gly-537, Ser-540, Arg-553, and Thr-554 each coordinate 3',5'-cyclic GMP. Residues Arg-553 and Thr-554 each coordinate 3',5'-cyclic AMP. Residues 615–669 (LEEKVTRMEGSVDLLQTRFARILAEYESMQQKLKQRLTKVEKFLKPLIETEFSAL) are a coiled coil.

This sequence belongs to the cyclic nucleotide-gated cation channel (TC 1.A.1.5) family. CNGA1 subfamily. As to quaternary structure, forms heterotetrameric channels composed of CNGA1 and CNGB1 subunits with 3:1 stoichiometry. May also form cyclic nucleotide-activated homotetrameric channels, that are efficiently activated by saturating cGMP, but poorly activated by saturating cAMP compared to the heterotetramer with CNGB1. The channel binds Ca(2+)-bound CALM1 via CaM1 and CaM2 regions of the CNGB1 subunit; this interaction modulates the affinity of the channel for cNMPs in response to intracellular Ca(2+) levels. In terms of tissue distribution, rod cells in the retina and inner medulla of kidney.

The protein localises to the cell membrane. It carries out the reaction Ca(2+)(in) = Ca(2+)(out). The catalysed reaction is Na(+)(in) = Na(+)(out). It catalyses the reaction K(+)(in) = K(+)(out). The enzyme catalyses NH4(+)(in) = NH4(+)(out). It carries out the reaction Rb(+)(in) = Rb(+)(out). The catalysed reaction is Li(+)(in) = Li(+)(out). It catalyses the reaction Cs(+)(in) = Cs(+)(out). Functionally, pore-forming subunit of the rod cyclic nucleotide-gated channel. Mediates rod photoresponses at dim light converting transient changes in intracellular cGMP levels into electrical signals. In the dark, cGMP levels are high and keep the channel open enabling a steady inward current carried by Na(+) and Ca(2+) ions that leads to membrane depolarization and neurotransmitter release from synaptic terminals. Upon photon absorption cGMP levels decline leading to channel closure and membrane hyperpolarization that ultimately slows neurotransmitter release and signals the presence of light, the end point of the phototransduction cascade. Conducts cGMP- and cAMP-gated ion currents, with permeability for monovalent and divalent cations. The selectivity for Ca(2+) over Na(+) increases with cGMP concentrations, whereas the selectivity among monovalent ions is independent of the cGMP levels. This is Cyclic nucleotide-gated channel alpha-1 (Cnga1) from Mus musculus (Mouse).